A 100-amino-acid polypeptide reads, in one-letter code: MLSINLSLCAHKKGMGSSKNGRDSESKRLGVKASDGEFVLAGNIIVRQRGTKIHPGVNVGRGKDDTLFAKADGLVKFEKRGKDKKFASVYPVEIEQSVAE.

The propeptide occupies Met1–Cys9.

It belongs to the bacterial ribosomal protein bL27 family. Post-translationally, the N-terminus is cleaved by ribosomal processing cysteine protease Prp.

The polypeptide is Large ribosomal subunit protein bL27 (Clostridium acetobutylicum (strain ATCC 824 / DSM 792 / JCM 1419 / IAM 19013 / LMG 5710 / NBRC 13948 / NRRL B-527 / VKM B-1787 / 2291 / W)).